A 165-amino-acid polypeptide reads, in one-letter code: Cyclic pyranopterin monophosphate synthase (165 aa).

Residues 76 to 78 (LCH) and 119 to 120 (ME) each bind substrate. Aspartate 134 is a catalytic residue.

This sequence belongs to the MoaC family. In terms of assembly, homohexamer; trimer of dimers.

It catalyses the reaction (8S)-3',8-cyclo-7,8-dihydroguanosine 5'-triphosphate = cyclic pyranopterin phosphate + diphosphate. It participates in cofactor biosynthesis; molybdopterin biosynthesis. Functionally, catalyzes the conversion of (8S)-3',8-cyclo-7,8-dihydroguanosine 5'-triphosphate to cyclic pyranopterin monophosphate (cPMP). In Photobacterium profundum (strain SS9), this protein is Cyclic pyranopterin monophosphate synthase.